The chain runs to 198 residues: Recombination protein RecR (198 aa).

The C4-type zinc-finger motif lies at Cys56–Cys71. Residues Lys79–Pro174 form the Toprim domain.

This sequence belongs to the RecR family.

Its function is as follows. May play a role in DNA repair. It seems to be involved in an RecBC-independent recombinational process of DNA repair. It may act with RecF and RecO. The sequence is that of Recombination protein RecR from Erythrobacter litoralis (strain HTCC2594).